We begin with the raw amino-acid sequence, 418 residues long: MSVYAGIFNTTLNPQELNMKSFAGTILRRVPNGSAPLLAMTSVVGSTTAKASTHGYFSKTMVFASAVVTAEAAADATVLTVENSDGLTKGMIFYNEATGENMRLELVNGLNLTVKRQTGRISAAIIAANTKLIVIGTAFEEGSQRPTARSIQPVYVPNFTQIFRNAWALTDTARASYAEAGYSNITESRRDCMDFHATEQETAIFFGQAFMGTYNGQPLHTTQGIVDAVRQYAPDNVNAMPNPTAVTYDDVVDATIDAFKWSVNVGDNTQRVMFCDTVGMRTMQDIGRFFGEVTVTQRETSYGMVFTEWKFFKGRLIIKEHPLFSAIGISPGFAVVVDVPAVKLAYMDGRNAKVENYGQGGGENKSGATDYSYGHGVDAQGGSLTSEWALELLNPQGCAVITGLQKAKERVYLTAPAP.

Multimerizes.

It is found in the virion. The most highly expressed virion protein; probably the major capsid protein. The chain is Major capsid protein from Pseudomonas phage PaMx41.